Consider the following 276-residue polypeptide: Formamidopyrimidine-DNA glycosylase (276 aa).

Pro2 (schiff-base intermediate with DNA) is an active-site residue. Glu3 serves as the catalytic Proton donor. Catalysis depends on Lys58, which acts as the Proton donor; for beta-elimination activity. 3 residues coordinate DNA: His92, Arg111, and Arg154. An FPG-type zinc finger spans residues 239–273 (HAYQRTGDPCERCGTPIQRIVVGQRGTHFCPKCQV). The Proton donor; for delta-elimination activity role is filled by Arg263.

The protein belongs to the FPG family. In terms of assembly, monomer. Zn(2+) is required as a cofactor.

It carries out the reaction Hydrolysis of DNA containing ring-opened 7-methylguanine residues, releasing 2,6-diamino-4-hydroxy-5-(N-methyl)formamidopyrimidine.. It catalyses the reaction 2'-deoxyribonucleotide-(2'-deoxyribose 5'-phosphate)-2'-deoxyribonucleotide-DNA = a 3'-end 2'-deoxyribonucleotide-(2,3-dehydro-2,3-deoxyribose 5'-phosphate)-DNA + a 5'-end 5'-phospho-2'-deoxyribonucleoside-DNA + H(+). Involved in base excision repair of DNA damaged by oxidation or by mutagenic agents. Acts as a DNA glycosylase that recognizes and removes damaged bases. Has a preference for oxidized purines, such as 7,8-dihydro-8-oxoguanine (8-oxoG). Has AP (apurinic/apyrimidinic) lyase activity and introduces nicks in the DNA strand. Cleaves the DNA backbone by beta-delta elimination to generate a single-strand break at the site of the removed base with both 3'- and 5'-phosphates. In Ligilactobacillus salivarius (strain UCC118) (Lactobacillus salivarius), this protein is Formamidopyrimidine-DNA glycosylase.